We begin with the raw amino-acid sequence, 114 residues long: Gas vesicle protein J1 (114 aa).

Positions 13 to 22 (LAEMLEMLLD) are alpha helix 1. Beta-strand stretches follow at residues 25-35 (VVVNADIAVSV) and 40-50 (LLGIELRAAIA). The short motif at 46-50 (RAAIA) is the Conserved in GvpM1/2 but not GvpA element. Alpha helix regions lie at residues 52-72 (FETA…ERVE), 78-87 (SPDQSDPASE), and 95-105 (TNPLSDDSTPT). Residues 63 to 114 (PTGTDMERVESAANISPDQSDPASETQSETESTNPLSDDSTPTASTSAEETK) are disordered. The span at 75–98 (ANISPDQSDPASETQSETESTNPL) shows a compositional bias: polar residues. Over residues 99 to 114 (SDDSTPTASTSAEETK) the composition is skewed to low complexity.

Belongs to the gas vesicle GvpA family. In terms of assembly, gvpF to GvpM interact with each other in vitro, and may form multi-subunit complex(es). Interacts with GvpA1.

The protein resides in the gas vesicle. Its function is as follows. Proteins GvpF to GvpM might be involved in nucleating gas vesicle formation. Mutagenesis of residues 13-61 shows that almost none of them can be substituted and still make gas vesicles. A minor component of the gas vesicle. Gas vesicles are hollow, gas filled proteinaceous nanostructures found in several microbial planktonic microorganisms. They allow positioning of halobacteria at the optimal depth for growth in the poorly aerated, shallow brine pools of their habitat. In terms of biological role, expression of a 9.5 kb p-vac DNA fragment containing 2 divergently transcribed regions (gvpD-gvpE-gvpF-gvpG-gvpH-gvpI-gvpJ-gvpK-gvpL-gvpM and gvpA-gvpC-gvpN-gvpO) allows H.volcanii to produce gas vesicles. All site-directed mutagenesis is tested in H.volcanii. A minimal gas vesicle can be made in H.volcanii by gvpA1-gvpO1 plus gvpF1-gvpG1-gvpJ1-gvpK1-gvpL1-gvpM1; lack of enough GvpJ1 prevents formation. A similar region restores gas vesicle production in H.halobium without the p-vac locus, but it still has the c-vac locus. This is Gas vesicle protein J1 (gvpJ11) from Halobacterium salinarum (strain ATCC 700922 / JCM 11081 / NRC-1) (Halobacterium halobium).